Here is a 435-residue protein sequence, read N- to C-terminus: GTPase Der (435 aa).

2 consecutive EngA-type G domains span residues 4 to 167 (KIVA…SKND) and 175 to 350 (TKIA…QSLS). Residues 10–17 (GRPNVGKS), 57–61 (DTGGI), 119–122 (NKYD), 181–188 (GRPNVGKS), 228–232 (DTAGI), and 293–296 (NKWD) each bind GTP. The region spanning 351 to 435 (VKVKTYVLNE…PINLIFRERK (85 aa)) is the KH-like domain.

It belongs to the TRAFAC class TrmE-Era-EngA-EngB-Septin-like GTPase superfamily. EngA (Der) GTPase family. As to quaternary structure, associates with the 50S ribosomal subunit.

Its function is as follows. GTPase that plays an essential role in the late steps of ribosome biogenesis. This is GTPase Der from Mycoplasma mycoides subsp. mycoides SC (strain CCUG 32753 / NCTC 10114 / PG1).